Reading from the N-terminus, the 283-residue chain is Diaminopimelate epimerase (283 aa).

The substrate site is built by N11 and N65. Catalysis depends on C74, which acts as the Proton donor. Substrate contacts are provided by residues 75 to 76 (GN), N163, N196, and 214 to 215 (ER). C223 acts as the Proton acceptor in catalysis. 224-225 (GT) is a binding site for substrate.

It belongs to the diaminopimelate epimerase family. As to quaternary structure, homodimer.

It is found in the cytoplasm. The catalysed reaction is (2S,6S)-2,6-diaminopimelate = meso-2,6-diaminopimelate. Its pathway is amino-acid biosynthesis; L-lysine biosynthesis via DAP pathway; DL-2,6-diaminopimelate from LL-2,6-diaminopimelate: step 1/1. In terms of biological role, catalyzes the stereoinversion of LL-2,6-diaminopimelate (L,L-DAP) to meso-diaminopimelate (meso-DAP), a precursor of L-lysine and an essential component of the bacterial peptidoglycan. This is Diaminopimelate epimerase from Desulfitobacterium hafniense (strain DSM 10664 / DCB-2).